The chain runs to 201 residues: Recombination protein RecR (201 aa).

Residues 60–75 (CSCCGNVDTSDPCTIC) form a C4-type zinc finger. Residues 83–178 (ATLIVVEDVS…RVTRLAHGVP (96 aa)) enclose the Toprim domain.

This sequence belongs to the RecR family.

Functionally, may play a role in DNA repair. It seems to be involved in an RecBC-independent recombinational process of DNA repair. It may act with RecF and RecO. The sequence is that of Recombination protein RecR from Brucella melitensis biotype 2 (strain ATCC 23457).